Consider the following 184-residue polypeptide: C-phycoerythrin class 1 subunit beta (184 aa).

(2R,3E)-phycoerythrobilin contacts are provided by cysteine 50 and cysteine 61. The residue at position 72 (asparagine 72) is an N4-methylasparagine. Positions 82 and 165 each coordinate (2R,3E)-phycoerythrobilin.

This sequence belongs to the phycobiliprotein family. Heterodimer of an alpha and a beta chain. Post-translationally, contains three covalently linked phycoerythrobilin chromophores.

It is found in the cellular thylakoid membrane. In terms of biological role, light-harvesting photosynthetic bile pigment-protein from the phycobiliprotein complex. In Synechococcus sp. (strain WH8020), this protein is C-phycoerythrin class 1 subunit beta (cpeB).